We begin with the raw amino-acid sequence, 158 residues long: C-type lectin lectoxin-Enh5 (158 aa).

Positions 1–23 are cleaved as a signal peptide; it reads MGQFTVVSLGLLAVFLSLSGAKG. Cystine bridges form between C26-C37, C54-C154, and C129-C146. A C-type lectin domain is found at 33 to 155; it reads RNGVCNKLFP…CASLHPFICQ (123 aa). The short motif at 119 to 121 is the Mannose-binding element; that stretch reads EPN. Residues E127, N142, and D143 each contribute to the Ca(2+) site.

It belongs to the true venom lectin family. Expressed by the venom gland.

The protein localises to the secreted. Functionally, mannose-binding lectin which recognizes specific carbohydrate structures and agglutinates a variety of animal cells by binding to cell-surface glycoproteins and glycolipids. May be a calcium-dependent lectin. The sequence is that of C-type lectin lectoxin-Enh5 from Pseudoferania polylepis (Macleay's water snake).